A 431-amino-acid chain; its full sequence is 5-methylthioadenosine/S-adenosylhomocysteine deaminase (431 aa).

Zn(2+)-binding residues include His-63 and His-65. The substrate site is built by Glu-92, Arg-144, and His-184. Residue His-211 participates in Zn(2+) binding. Substrate is bound by residues Glu-214 and Asp-299. Asp-299 is a binding site for Zn(2+).

The protein belongs to the metallo-dependent hydrolases superfamily. MTA/SAH deaminase family. Zn(2+) serves as cofactor.

The catalysed reaction is S-adenosyl-L-homocysteine + H2O + H(+) = S-inosyl-L-homocysteine + NH4(+). It carries out the reaction S-methyl-5'-thioadenosine + H2O + H(+) = S-methyl-5'-thioinosine + NH4(+). Its function is as follows. Catalyzes the deamination of 5-methylthioadenosine and S-adenosyl-L-homocysteine into 5-methylthioinosine and S-inosyl-L-homocysteine, respectively. Is also able to deaminate adenosine. This chain is 5-methylthioadenosine/S-adenosylhomocysteine deaminase, found in Thermoanaerobacter pseudethanolicus (strain ATCC 33223 / 39E) (Clostridium thermohydrosulfuricum).